The sequence spans 215 residues: Pyrophosphatase PpaX (215 aa).

Asp9 (nucleophile) is an active-site residue.

It belongs to the HAD-like hydrolase superfamily. PpaX family. The cofactor is Mg(2+).

It catalyses the reaction diphosphate + H2O = 2 phosphate + H(+). Functionally, hydrolyzes pyrophosphate formed during P-Ser-HPr dephosphorylation by HPrK/P. Might play a role in controlling the intracellular pyrophosphate pool. This is Pyrophosphatase PpaX from Bacillus mycoides (strain KBAB4) (Bacillus weihenstephanensis).